Consider the following 284-residue polypeptide: Bifunctional protein FolD 1 (284 aa).

Residues 166-168, Ser191, and Ile232 each bind NADP(+); that span reads GAS.

It belongs to the tetrahydrofolate dehydrogenase/cyclohydrolase family. In terms of assembly, homodimer.

The catalysed reaction is (6R)-5,10-methylene-5,6,7,8-tetrahydrofolate + NADP(+) = (6R)-5,10-methenyltetrahydrofolate + NADPH. The enzyme catalyses (6R)-5,10-methenyltetrahydrofolate + H2O = (6R)-10-formyltetrahydrofolate + H(+). Its pathway is one-carbon metabolism; tetrahydrofolate interconversion. In terms of biological role, catalyzes the oxidation of 5,10-methylenetetrahydrofolate to 5,10-methenyltetrahydrofolate and then the hydrolysis of 5,10-methenyltetrahydrofolate to 10-formyltetrahydrofolate. This is Bifunctional protein FolD 1 from Hydrogenovibrio crunogenus (strain DSM 25203 / XCL-2) (Thiomicrospira crunogena).